A 242-amino-acid chain; its full sequence is Small ribosomal subunit protein uS2 (242 aa).

This sequence belongs to the universal ribosomal protein uS2 family.

The chain is Small ribosomal subunit protein uS2 from Aliivibrio fischeri (strain ATCC 700601 / ES114) (Vibrio fischeri).